The chain runs to 184 residues: Ribosome-recycling factor (184 aa).

Belongs to the RRF family.

The protein localises to the cytoplasm. Responsible for the release of ribosomes from messenger RNA at the termination of protein biosynthesis. May increase the efficiency of translation by recycling ribosomes from one round of translation to another. This Stenotrophomonas maltophilia (strain R551-3) protein is Ribosome-recycling factor.